A 244-amino-acid polypeptide reads, in one-letter code: PHD finger protein ALFIN-LIKE 2 (244 aa).

A compositionally biased stretch (basic and acidic residues) spans 137–148 (LSDRKHGRDNKS). A disordered region spans residues 137–178 (LSDRKHGRDNKSGADNGSKSRHSGKRANDVQTKTSRPAVVDD). A PHD-type zinc finger spans residues 187-239 (ETLCGTCGGRYNANEFWIGCDICERWFHGKCVRITPAKAEHIKHYKCPDCSSS).

The protein belongs to the Alfin family. As to quaternary structure, interacts with H3K4me3 and to a lesser extent with H3K4me2.

It localises to the nucleus. In terms of biological role, histone-binding component that specifically recognizes H3 tails trimethylated on 'Lys-4' (H3K4me3), which mark transcription start sites of virtually all active genes. The sequence is that of PHD finger protein ALFIN-LIKE 2 from Oryza sativa subsp. indica (Rice).